Here is a 788-residue protein sequence, read N- to C-terminus: Structure-specific endonuclease subunit SLX4 (788 aa).

Disordered regions lie at residues 59 to 86 (LQNENLENKNKDTSITKPKRRSKRDNNR), 562 to 584 (KRQPVDSENEIRDSEDEGEHDNS), and 599 to 622 (DLVNLGRNPRNENDTSVLQVPSSP). Over residues 562–573 (KRQPVDSENEIR) the composition is skewed to basic and acidic residues. Residues 612-622 (DTSVLQVPSSP) show a composition bias toward polar residues.

This sequence belongs to the SLX4 family. Forms a heterodimer with SLX1. Phosphorylated in response to DNA damage.

It localises to the nucleus. Regulatory subunit of the SLX1-SLX4 structure-specific endonuclease that resolves DNA secondary structures generated during DNA repair and recombination. Has endonuclease activity towards branched DNA substrates, introducing single-strand cuts in duplex DNA close to junctions with ss-DNA. The protein is Structure-specific endonuclease subunit SLX4 of Debaryomyces hansenii (strain ATCC 36239 / CBS 767 / BCRC 21394 / JCM 1990 / NBRC 0083 / IGC 2968) (Yeast).